Reading from the N-terminus, the 83-residue chain is Small ribosomal subunit protein uS17 (83 aa).

The protein belongs to the universal ribosomal protein uS17 family. As to quaternary structure, part of the 30S ribosomal subunit.

Functionally, one of the primary rRNA binding proteins, it binds specifically to the 5'-end of 16S ribosomal RNA. This chain is Small ribosomal subunit protein uS17, found in Magnetococcus marinus (strain ATCC BAA-1437 / JCM 17883 / MC-1).